A 396-amino-acid polypeptide reads, in one-letter code: Tryptophan synthase beta chain (396 aa).

Lys-86 is modified (N6-(pyridoxal phosphate)lysine).

This sequence belongs to the TrpB family. As to quaternary structure, tetramer of two alpha and two beta chains. It depends on pyridoxal 5'-phosphate as a cofactor.

The enzyme catalyses (1S,2R)-1-C-(indol-3-yl)glycerol 3-phosphate + L-serine = D-glyceraldehyde 3-phosphate + L-tryptophan + H2O. The protein operates within amino-acid biosynthesis; L-tryptophan biosynthesis; L-tryptophan from chorismate: step 5/5. Its function is as follows. The beta subunit is responsible for the synthesis of L-tryptophan from indole and L-serine. This is Tryptophan synthase beta chain from Vibrio campbellii (strain ATCC BAA-1116).